The primary structure comprises 294 residues: StAR-related lipid transfer protein 3 (294 aa).

An MENTAL domain is found at 1 to 66 (DGYICNNGMD…YSPPESLAGS (66 aa)). The short motif at 55-61 (QFYSPPE) is the FFAT element. The disordered stretch occupies residues 58–77 (SPPESLAGSEEDLDEEGLGR). Residues 79–292 (AVSPQEKALV…LRQRIRDLRS (214 aa)) enclose the START domain.

Belongs to the STARD3 family. Homodimer. Phosphorylated. Phosphorylation allows the tethering of two membranes that participates in the formation of ER-endosome contacts. Phosphorylation of FFAT motif drives membrane tethering between the endoplasmic reticulum and late endosomes that in turn allows the efficient transport of sterol mediated by the START domain.

The protein localises to the late endosome membrane. It catalyses the reaction cholesterol(in) = cholesterol(out). Its function is as follows. Sterol-binding protein that mediates cholesterol transport from the endoplasmic reticulum to endosomes. The sterol transport mechanism is triggered by phosphorylation of FFAT motif that leads to membrane tethering between the endoplasmic reticulum and late endosomes. Acts as a lipid transfer protein that redirects sterol to the endosome at the expense of the cell membrane and favors membrane formation inside endosomes. This Salvelinus fontinalis (Brook trout) protein is StAR-related lipid transfer protein 3.